A 774-amino-acid chain; its full sequence is Lon protease 1 (774 aa).

Residues 9 to 202 (IPLLPLRGLL…KVIDFINNEK (194 aa)) form the Lon N-terminal domain. 354-361 (GPPGVGKT) is a binding site for ATP. Residues 590–771 (EDQVGVVTGL…DEVLEHALVG (182 aa)) enclose the Lon proteolytic domain. Residues Ser-677 and Lys-720 contribute to the active site.

This sequence belongs to the peptidase S16 family. As to quaternary structure, homohexamer. Organized in a ring with a central cavity. Exists as a mixture of small oligomeric species in solution.

Its subcellular location is the cytoplasm. It catalyses the reaction Hydrolysis of proteins in presence of ATP.. Functionally, ATP-dependent serine protease that mediates the selective degradation of mutant and abnormal proteins as well as certain short-lived regulatory proteins. Required for cellular homeostasis and for survival from DNA damage and developmental changes induced by stress. Degrades polypeptides processively to yield small peptide fragments that are 5 to 10 amino acids long. Binds to DNA in a double-stranded, site-specific manner. Has been implicated in preventing sigma(G) activity under non-sporulation conditions. The sequence is that of Lon protease 1 from Bacillus subtilis (strain 168).